The sequence spans 136 residues: Mitochondrial pyruvate carrier 1-like protein (136 aa).

Over 2 to 19 (ARMAVLWRKMRDNFQSKE) the chain is Mitochondrial matrix. The helical transmembrane segment at 20–42 (FREYVSSTHFWGPAFSWGLPLAA) threads the bilayer. Topologically, residues 43-51 (FKDMKASPE) are mother cell cytoplasmic. The chain crosses the membrane as a helical span at residues 52–74 (IISGRMTTALILYSAIFMRFAYR). Residues 75 to 136 (VQPRNLLLMA…PGSQPPKQAS (62 aa)) are Mitochondrial matrix-facing. Positions 111 to 136 (EAKARDPPATAAAATSPGSQPPKQAS) are disordered. The span at 117–136 (PPATAAAATSPGSQPPKQAS) shows a compositional bias: low complexity.

The protein belongs to the mitochondrial pyruvate carrier (MPC) (TC 2.A.105) family.

It localises to the mitochondrion inner membrane. The catalysed reaction is pyruvate(out) + H(+)(out) = pyruvate(in) + H(+)(in). Mediates the uptake of pyruvate into mitochondria. The protein is Mitochondrial pyruvate carrier 1-like protein (MPC1L) of Homo sapiens (Human).